The chain runs to 536 residues: Caspase A (536 aa).

Residues 1–273 (MVLKTIEDNC…DSQSRMPRTD (273 aa)) constitute a propeptide, removed in mature form by autoprocessing. Active-site residues include His364 and Cys406.

This sequence belongs to the peptidase C14A family. In terms of assembly, heterodimer formed by the tight association of the large subunit p16 and the small subunit p14. In terms of processing, autocatalytic cleavage removes the propeptide and generates the two active subunits p16 and p14 in vitro. Cannot be cleaved by ced-3 in vitro. As to expression, isoform a: Expression is restricted to the late germline pachytene stage of meiosis I in both L4 larvae and adult hermaphrodite gonads. Isoform b: Expression is restricted to the late germline pachytene stage of meiosis I in both L4 larvae and adult hermaphrodite gonads.

It catalyses the reaction Strict requirement for an Asp residue at position P1 and has a preferred cleavage sequence of Tyr-Val-Ala-Asp-|-.. Its activity is regulated as follows. Inhibited by cysteine protease inhibitor iodoacetic acid (CH3COOI) but not by N-[N-(L-3-transcarboxirane-2-carbonyl)-leucyl]-agmatine (E-64) or benzyloxycarbonyl-DEVD-fluoro-methyl ketone (Z-DEVD-FMK). Functionally, cysteine protease which, in vitro, cleaves itself and caspase ced-3 into their mature active forms. Also cleaves, in vitro, inactive caspase csp-2 isoform b. Required maternally to induce apoptosis in a subset of cells fated to die during embryogenesis, mostly independently of the ced-9, ced-4 and ced-3 canonical apoptosis pathway. Involved in the degeneration of dopaminergic CEP neurons in response to high Mn(2+) levels. Its function is as follows. Dispensable for regulating apoptosis during embryogenesis. In Caenorhabditis elegans, this protein is Caspase A.